Reading from the N-terminus, the 69-residue chain is uncharacterized protein (69 aa).

The stretch at 21-64 forms a coiled coil; that stretch reads LNLLKGGEEKISEVELKLDEMEKKMDSLLVQLEDLHRDNNDLAK.

This is an uncharacterized protein from Saccharomyces cerevisiae (strain ATCC 204508 / S288c) (Baker's yeast).